A 402-amino-acid chain; its full sequence is MESTEQPRNISGSMQSPRSPSSHPYLSVSVTDPVKLGNGVQAYISYRVITKTNLPEYQGPEKIVIRRYSDFVWLRDRLFEKYKGIFIPPLPEKSAVEKFRFSAEFIEMRRAALDIFVNRIALHPELQQSEDLRTFLQADEETMDRFRFQETSIFKKPADLMQMFRDVQSKVSDAVLGKEKPVEETTADYEKLKHYIFELENHLTEAQKHAYRLVKRHRELGQSLLDFGKAVKLLGACEGEPTGKAFSDLGTKSELLSIKLQKEAQQVLMNFEEPLKDYVRYVQSIKATIAERGTAFKQHCELSETTKLKEINLDKLMLTRSDKVGEAEIEYREIKAESEEATRRFERIVKRMEDEIVRFQEQKTEEMGVAFHQFAKGQARLANSVADAWRSLLPKLEASYSV.

A compositionally biased stretch (polar residues) spans 1–10 (MESTEQPRNI). The tract at residues 1–25 (MESTEQPRNISGSMQSPRSPSSHPY) is disordered. Residues 11-24 (SGSMQSPRSPSSHP) show a composition bias toward low complexity. S16 is modified (phosphoserine). The PX domain maps to 24–143 (PYLSVSVTDP…TFLQADEETM (120 aa)). A 1,2-diacyl-sn-glycero-3-phospho-(1D-myo-inositol-3-phosphate) is bound by residues R67, K93, and R109. A BAR domain is found at 160–402 (LMQMFRDVQS…LPKLEASYSV (243 aa)).

The protein belongs to the sorting nexin family. Homodimer. Heterodimer with SNX2A or SNX2B. Component of the retromer complex which consists of VPS29 (MAG1), VPS26 (VPS26A or VPS26B), VPS35 (VPS35A or VPS35B or VPS35C), VPS5/17 (SNX1 or SNX2A or SNX2B). Interacts with BLOS1 and BLOS2. Ubiquitously expressed.

The protein localises to the cytoplasm. It is found in the endosome membrane. The protein resides in the prevacuolar compartment membrane. It localises to the golgi apparatus. Its subcellular location is the trans-Golgi network membrane. In terms of biological role, plays a role in vesicular protein sorting. Acts at the crossroads between the secretory and endocytic pathways. Is involved in the endosome to vacuole protein transport via its interaction with the BLOS1/2 proteins and, as component of the membrane-associated retromer complex, is also involved in endosome-to-Golgi retrograde transport. Required for the auxin-carrier protein PIN2 sorting to the lytic vacuolar pathway and the trafficking of several plasma membrane proteins. Also involved in the efficient sorting of seed storage protein globulin 12S. The chain is Sorting nexin 1 (SNX1) from Arabidopsis thaliana (Mouse-ear cress).